The chain runs to 349 residues: Quinolinate synthase (349 aa).

Histidine 52 and serine 69 together coordinate iminosuccinate. Cysteine 114 serves as a coordination point for [4Fe-4S] cluster. Iminosuccinate-binding positions include 140 to 142 and serine 157; that span reads YFN. Residue cysteine 201 participates in [4Fe-4S] cluster binding. Residues 227 to 229 and threonine 255 contribute to the iminosuccinate site; that span reads HPE. Residue cysteine 300 coordinates [4Fe-4S] cluster.

Belongs to the quinolinate synthase family. Type 2 subfamily. [4Fe-4S] cluster is required as a cofactor.

The protein resides in the cytoplasm. It catalyses the reaction iminosuccinate + dihydroxyacetone phosphate = quinolinate + phosphate + 2 H2O + H(+). It participates in cofactor biosynthesis; NAD(+) biosynthesis; quinolinate from iminoaspartate: step 1/1. Functionally, catalyzes the condensation of iminoaspartate with dihydroxyacetone phosphate to form quinolinate. The polypeptide is Quinolinate synthase (Mycolicibacterium paratuberculosis (strain ATCC BAA-968 / K-10) (Mycobacterium paratuberculosis)).